Here is a 392-residue protein sequence, read N- to C-terminus: Xylose operon regulatory protein (392 aa).

Positions 288 to 386 (IQAMHYIRNH…DTTPKEYRDV (99 aa)) constitute an HTH araC/xylS-type domain. 2 consecutive DNA-binding regions (H-T-H motif) follow at residues 305-326 (DQVLDAVGISRSNLEKRFKEEV) and 353-376 (INEISQMCGYPSLQYFYSVFKKAY).

Functionally, regulatory protein for the xylBAFGHR operon. This chain is Xylose operon regulatory protein (xylR), found in Escherichia coli O157:H7.